Here is a 509-residue protein sequence, read N- to C-terminus: Scavenger receptor class B member 1 (509 aa).

At 1–11 the chain is on the cytoplasmic side; it reads MGSRSRARQVA. Residues 12–32 form a helical membrane-spanning segment; sequence AALGFVGLLLAALGAVMIVMV. At 33–439 the chain is on the extracellular side; that stretch reads PSIIKQQVLK…FYTQLVLMPK (407 aa). N102, N108, N173, N212, N255, N310, N330, and N383 each carry an N-linked (GlcNAc...) asparagine glycan. A disulfide bridge connects residues C251 and C384. Residues 440–460 traverse the membrane as a helical segment; that stretch reads VLHYAQYVLLALGCVLLFIPI. The Cytoplasmic segment spans residues 461 to 509; that stretch reads VYQIRSQEKCYLFWSSSKKGSKDKEAIQAYSESLMTPAPKGTVLQEARL.

This sequence belongs to the CD36 family. In terms of assembly, the C-terminal region binds to PDZK1. In terms of processing, N-glycosylated. The six cysteines of the extracellular domain are all involved in intramolecular disulfide bonds.

Its subcellular location is the cell membrane. The protein localises to the membrane. It is found in the caveola. In terms of biological role, receptor for different ligands such as phospholipids, cholesterol ester, lipoproteins, phosphatidylserine and apoptotic cells. Receptor for HDL, mediating selective uptake of cholesteryl ether and HDL-dependent cholesterol efflux. Also facilitates the flux of free and esterified cholesterol between the cell surface and apoB-containing lipoproteins and modified lipoproteins, although less efficiently than HDL. May be involved in the phagocytosis of apoptotic cells, via its phosphatidylserine binding activity. This is Scavenger receptor class B member 1 (SCARB1) from Sus scrofa (Pig).